The primary structure comprises 466 residues: Ribulose bisphosphate carboxylase large chain (466 aa).

K5 bears the N6,N6,N6-trimethyllysine mark. Residues N114 and T164 each contribute to the substrate site. K166 (proton acceptor) is an active-site residue. Residue K168 coordinates substrate. Residues K192, D194, and E195 each coordinate Mg(2+). K192 carries the post-translational modification N6-carboxylysine. H285 functions as the Proton acceptor in the catalytic mechanism. Residues R286, H318, and S370 each coordinate substrate.

It belongs to the RuBisCO large chain family. Type I subfamily. As to quaternary structure, heterohexadecamer of 8 large chains and 8 small chains. Requires Mg(2+) as cofactor.

The protein resides in the plastid. It is found in the chloroplast. The enzyme catalyses 2 (2R)-3-phosphoglycerate + 2 H(+) = D-ribulose 1,5-bisphosphate + CO2 + H2O. It catalyses the reaction D-ribulose 1,5-bisphosphate + O2 = 2-phosphoglycolate + (2R)-3-phosphoglycerate + 2 H(+). RuBisCO catalyzes two reactions: the carboxylation of D-ribulose 1,5-bisphosphate, the primary event in carbon dioxide fixation, as well as the oxidative fragmentation of the pentose substrate in the photorespiration process. Both reactions occur simultaneously and in competition at the same active site. In Lobelia sp, this protein is Ribulose bisphosphate carboxylase large chain.